The sequence spans 373 residues: Flagellar P-ring protein (373 aa).

The first 28 residues, 1 to 28 (MPRVSTHLVKLAAAALCALLLSAVAASA), serve as a signal peptide directing secretion.

This sequence belongs to the FlgI family. The basal body constitutes a major portion of the flagellar organelle and consists of four rings (L,P,S, and M) mounted on a central rod.

It localises to the periplasm. The protein localises to the bacterial flagellum basal body. Functionally, assembles around the rod to form the L-ring and probably protects the motor/basal body from shearing forces during rotation. This chain is Flagellar P-ring protein, found in Rhodopseudomonas palustris (strain ATCC BAA-98 / CGA009).